The primary structure comprises 1032 residues: Probable ATP-dependent RNA helicase DDX46 (1032 aa).

Over residues 1 to 24 (MGRESRHYRKRSASRGRSGSRSRS) the composition is skewed to basic residues. The interval 1–227 (MGRESRHYRK…NEMEDEELDP (227 aa)) is disordered. Residue glycine 2 is the site of N-myristoyl glycine attachment. Residues 26-49 (SPSDKRSKRGDDRRSRSRDRDRRR) are compositionally biased toward basic and acidic residues. 2 stretches are compositionally biased toward basic residues: residues 50–73 (ERSR…RSRS) and 81–103 (ERRR…RRSR). Positions 112–200 (KKAENRSRSK…EMKQGKKWSL (89 aa)) are enriched in basic and acidic residues. Positions 152–197 (DQNKLEEEMRKRKERVEKWREEQRKKAMENIGELKKEIEEMKQGKK) form a coiled coil. Lysine 186 is covalently cross-linked (Glycyl lysine isopeptide (Lys-Gly) (interchain with G-Cter in SUMO2)). The residue at position 199 (serine 199) is a Phosphoserine. Positions 201 to 211 (EDDDDDEDDPA) are enriched in acidic residues. An N6-acetyllysine modification is found at lysine 263. Tyrosine 294 is modified (phosphotyrosine). 2 positions are modified to phosphoserine: serine 295 and serine 296. Lysine 325 participates in a covalent cross-link: Glycyl lysine isopeptide (Lys-Gly) (interchain with G-Cter in SUMO2). Position 346 is a phosphoserine (serine 346). Positions 372–400 (KSWVQCGISMKILNSLKKHGYEKPTPIQT) match the Q motif motif. The 179-residue stretch at 403–581 (IPAIMSGRDL…RRILSKPIEV (179 aa)) folds into the Helicase ATP-binding domain. The DEAD box signature appears at 529-532 (DEAD). A Helicase C-terminal domain is found at 592 to 753 (DVEQQVIVIE…AVPPDLEKLW (162 aa)). N6-acetyllysine is present on lysine 776. Lysine 779 is covalently cross-linked (Glycyl lysine isopeptide (Lys-Gly) (interchain with G-Cter in SUMO2)). Serine 804 carries the post-translational modification Phosphoserine. Lysine 904 bears the N6-acetyllysine mark. Residues lysine 908 and lysine 916 each participate in a glycyl lysine isopeptide (Lys-Gly) (interchain with G-Cter in SUMO2) cross-link. Position 929 is a phosphoserine (serine 929).

Belongs to the DEAD box helicase family. DDX46/PRP5 subfamily. Component of the 17S U2 SnRNP complex, a ribonucleoprotein complex that contains small nuclear RNA (snRNA) U2 and a number of specific proteins. Within the 17S U2 SnRNP complex, DDX46 is part of the SF3B subcomplex, which is required for 'A' complex assembly formed by the stable binding of U2 snRNP to the branchpoint sequence in pre-mRNA. Recruited to the 17S U2 SnRNP complex following release of DDX42; DDX42 and DDX46 bind the SF3B subcomplex in a competitive manner.

The protein resides in the nucleus speckle. It is found in the nucleus. It localises to the cajal body. The enzyme catalyses ATP + H2O = ADP + phosphate + H(+). Its function is as follows. Component of the 17S U2 SnRNP complex of the spliceosome, a large ribonucleoprotein complex that removes introns from transcribed pre-mRNAs. The 17S U2 SnRNP complex (1) directly participates in early spliceosome assembly and (2) mediates recognition of the intron branch site during pre-mRNA splicing by promoting the selection of the pre-mRNA branch-site adenosine, the nucleophile for the first step of splicing. Within the 17S U2 SnRNP complex, DDX46 plays essential roles during assembly of pre-spliceosome and proofreading of the branch site. This is Probable ATP-dependent RNA helicase DDX46 (Ddx46) from Rattus norvegicus (Rat).